A 153-amino-acid polypeptide reads, in one-letter code: MSNQLNTMDIKEILKYLPHRYPFLLIDRVLDFTVGEHLHAIKNVTINEPFFQGHFPIQPVMPGVLILEAMAQATGLLAFKTMSTEPSPEVLYYFAGIDKARFKRVVEPGDQIHFHVKMIKERRGIGVFVGEALVDGELVCSAEIMCARREIKK.

The active site involves H54.

It belongs to the thioester dehydratase family. FabZ subfamily.

It localises to the cytoplasm. The enzyme catalyses a (3R)-hydroxyacyl-[ACP] = a (2E)-enoyl-[ACP] + H2O. Its function is as follows. Involved in unsaturated fatty acids biosynthesis. Catalyzes the dehydration of short chain beta-hydroxyacyl-ACPs and long chain saturated and unsaturated beta-hydroxyacyl-ACPs. The protein is 3-hydroxyacyl-[acyl-carrier-protein] dehydratase FabZ of Shewanella frigidimarina (strain NCIMB 400).